The chain runs to 513 residues: Bifunctional purine biosynthesis protein PurH (513 aa).

In terms of domain architecture, MGS-like spans 1–147; the sequence is MIQIKRALVS…KNHKNVVVLT (147 aa).

Belongs to the PurH family.

It carries out the reaction (6R)-10-formyltetrahydrofolate + 5-amino-1-(5-phospho-beta-D-ribosyl)imidazole-4-carboxamide = 5-formamido-1-(5-phospho-D-ribosyl)imidazole-4-carboxamide + (6S)-5,6,7,8-tetrahydrofolate. The catalysed reaction is IMP + H2O = 5-formamido-1-(5-phospho-D-ribosyl)imidazole-4-carboxamide. Its pathway is purine metabolism; IMP biosynthesis via de novo pathway; 5-formamido-1-(5-phospho-D-ribosyl)imidazole-4-carboxamide from 5-amino-1-(5-phospho-D-ribosyl)imidazole-4-carboxamide (10-formyl THF route): step 1/1. It participates in purine metabolism; IMP biosynthesis via de novo pathway; IMP from 5-formamido-1-(5-phospho-D-ribosyl)imidazole-4-carboxamide: step 1/1. The polypeptide is Bifunctional purine biosynthesis protein PurH (Leptospira biflexa serovar Patoc (strain Patoc 1 / Ames)).